Reading from the N-terminus, the 189-residue chain is UPF0312 protein VPA0850 (189 aa).

Positions 1-22 (MKKSLFATGLAIAMALPLGAQA) are cleaved as a signal peptide.

This sequence belongs to the UPF0312 family. Type 1 subfamily.

The protein resides in the periplasm. The polypeptide is UPF0312 protein VPA0850 (Vibrio parahaemolyticus serotype O3:K6 (strain RIMD 2210633)).